Consider the following 303-residue polypeptide: Zinc import ATP-binding protein ZnuC (303 aa).

In terms of domain architecture, ABC transporter spans 17-232; sequence VSLENVGVLR…PEYVRLFGSR (216 aa). An ATP-binding site is contributed by 49–56; that stretch reads GPNGSGKS. Residues 263-303 are disordered; the sequence is DHCHPDDGHHAHEHGHAGHEHDHDHPDHAHPHAHEAGERHA.

This sequence belongs to the ABC transporter superfamily. Zinc importer (TC 3.A.1.15.5) family. The complex is composed of two ATP-binding proteins (ZnuC), two transmembrane proteins (ZnuB) and a solute-binding protein (ZnuA).

Its subcellular location is the cell inner membrane. The catalysed reaction is Zn(2+)(out) + ATP(in) + H2O(in) = Zn(2+)(in) + ADP(in) + phosphate(in) + H(+)(in). In terms of biological role, part of the ABC transporter complex ZnuABC involved in zinc import. Responsible for energy coupling to the transport system. The sequence is that of Zinc import ATP-binding protein ZnuC from Rhizobium johnstonii (strain DSM 114642 / LMG 32736 / 3841) (Rhizobium leguminosarum bv. viciae).